A 98-amino-acid chain; its full sequence is Peptides MS9.1 (98 aa).

Residues 1–21 form the signal peptide; the sequence is MKQSLILAVLCLALVFATIEA. Positions 22-27 are excised as a propeptide; sequence KPKADP. 2 disulfide bridges follow: Cys34/Cys46 and Cys37/Cys52. Propeptides lie at residues 63–64 and 92–98; these read DP and DPVRDAE.

The protein belongs to the sea anemone BBH family.

The protein resides in the secreted. Its subcellular location is the nematocyst. In terms of biological role, acts as a positive modulator of mammalian TRPA1, a non-selective cation channel involved in detection of pain, in vitro yet has an analgesic and anti-inflammatory effect in vivo. This Metridium senile (Brown sea anemone) protein is Peptides MS9.1.